Reading from the N-terminus, the 135-residue chain is ATP synthase epsilon chain (135 aa).

This sequence belongs to the ATPase epsilon chain family. In terms of assembly, F-type ATPases have 2 components, CF(1) - the catalytic core - and CF(0) - the membrane proton channel. CF(1) has five subunits: alpha(3), beta(3), gamma(1), delta(1), epsilon(1). CF(0) has three main subunits: a, b and c.

It is found in the cell inner membrane. Its function is as follows. Produces ATP from ADP in the presence of a proton gradient across the membrane. The protein is ATP synthase epsilon chain of Rhizobium leguminosarum bv. trifolii (strain WSM2304).